Here is a 279-residue protein sequence, read N- to C-terminus: Protease HtpX homolog (279 aa).

2 helical membrane passes run Val6 to Gly26 and Gly29 to Ser49. A Zn(2+)-binding site is contributed by His130. Glu131 is an active-site residue. His134 serves as a coordination point for Zn(2+). 2 consecutive transmembrane segments (helical) span residues Ile145–Gly165 and Val176–Ile196. Zn(2+) is bound at residue Glu201.

This sequence belongs to the peptidase M48B family. Zn(2+) serves as cofactor.

Its subcellular location is the cell inner membrane. This is Protease HtpX homolog from Gemmatimonas aurantiaca (strain DSM 14586 / JCM 11422 / NBRC 100505 / T-27).